A 924-amino-acid chain; its full sequence is Protein argonaute 4 (924 aa).

Disordered stretches follow at residues 1–37 (MDST…PPNV) and 159–185 (TRAN…RRPN). Residues 26 to 37 (LPPPPPVIPPNV) show a composition bias toward pro residues. A compositionally biased stretch (low complexity) spans 162–173 (NGNGSPNGNESP). Residues 292–408 (PVVDFLIANQ…IPLELCALVP (117 aa)) enclose the PAZ domain. The Piwi domain maps to 577–885 (FILCVLPDKK…AAAQLGTFMK (309 aa)). A Nuclear localization signal motif is present at residues 584-591 (DKKNSDLY).

It belongs to the argonaute family. Ago subfamily. In terms of assembly, interacts with NRPE1 (via C-terminus). Binding to NRPE1 is required for its function in RdDM. Interacts with turnip crinkle virus (TCV) capsid protein P38; this interaction inhibits probably RNA silencing ability of AGO4. Interacts with SDE3. Binds to RDM3. Binds chromatin at loci subject to transcriptional silencing. Interacts with MBD6. Expressed in embryos, mature leaves, vascular tissue of the sepals, stamens and stigma, at the tip of the style and siliques.

It localises to the nucleus. The protein resides in the nucleolus. Its subcellular location is the nucleoplasm. It is found in the cajal body. In terms of biological role, together with RDM3, required for transcriptional gene silencing (TGS) by DNA methylation and repressive histone modifications (H3K9me2) of several chromatin loci. Component of the RISC complex that associate with the small interfering RNA (siRNA) pathway involved in direct cytosine methylation at endogenous DNA repeats. Forms a AGO4/NRPE1/siRNA complex in cajal body, facilitating its function in RNA-directed gene silencing of target loci. Required for CpNpG and asymmetric DNA methylation as well as histone H3 'Lys-9' methylation (H3K9me) at SUP and SN1 loci. May be not required for CpG methylation. Required for the production and maintenance of retrotransposon SN1 and Copia and ribosomal 5S 25 nucleotide siRNAs specialized in gene silencing at chromatin level. Involved in de novo methylation of FWA gene and required for the maintenance of RNA-directed DNA methylation (RdDM) triggered by inverted repeat transgenes. Interacts with miRNA miR390 and miR172, targeting respectively TAS3 and AP2 mRNAs, and mediates cleavage of miRNA targets. Associates mainly with small RNAs of 24 nucleotide in length and preferentially recruits small RNAs with a 5' terminal adenosine. Targeted by the turnip yellows virus (TuYV) protein P0 (via F-box-like domain) for probable proteasome degradation and thereby inactivating AGO4 function in RNA silencing. Required for resistance to the bacterial pathogen P.syringae. Works independently of the RdDM pathway in mediating resistance to P.syringae. RdDM is involved in viral genome methylation as an epigenetic defense against geminiviruses. This Arabidopsis thaliana (Mouse-ear cress) protein is Protein argonaute 4.